Consider the following 315-residue polypeptide: Methionyl-tRNA formyltransferase (315 aa).

Residue 113–116 (SLLP) participates in (6S)-5,6,7,8-tetrahydrofolate binding.

The protein belongs to the Fmt family.

The catalysed reaction is L-methionyl-tRNA(fMet) + (6R)-10-formyltetrahydrofolate = N-formyl-L-methionyl-tRNA(fMet) + (6S)-5,6,7,8-tetrahydrofolate + H(+). Its function is as follows. Attaches a formyl group to the free amino group of methionyl-tRNA(fMet). The formyl group appears to play a dual role in the initiator identity of N-formylmethionyl-tRNA by promoting its recognition by IF2 and preventing the misappropriation of this tRNA by the elongation apparatus. This chain is Methionyl-tRNA formyltransferase, found in Cronobacter sakazakii (strain ATCC BAA-894) (Enterobacter sakazakii).